A 184-amino-acid chain; its full sequence is Deoxyuridine 5'-triphosphate nucleotidohydrolase (184 aa).

Residues 1 to 16 are compositionally biased toward polar residues; it reads MPHTQTDAHQNNQENF. Positions 1–25 are disordered; sequence MPHTQTDAHQNNQENFSSSLISSRP. Residues 96 to 98, N109, 113 to 115, and K123 each bind substrate; these read RSG and TID. A disordered region spans residues 165 to 184; the sequence is STKNTVGNRGAGGFGSTGHD. The segment covering 173 to 184 has biased composition (gly residues); that stretch reads RGAGGFGSTGHD.

Belongs to the dUTPase family. Requires Mg(2+) as cofactor.

The catalysed reaction is dUTP + H2O = dUMP + diphosphate + H(+). It participates in pyrimidine metabolism; dUMP biosynthesis; dUMP from dCTP (dUTP route): step 2/2. This enzyme is involved in nucleotide metabolism: it produces dUMP, the immediate precursor of thymidine nucleotides and it decreases the intracellular concentration of dUTP so that uracil cannot be incorporated into DNA. The protein is Deoxyuridine 5'-triphosphate nucleotidohydrolase of Bartonella henselae (strain ATCC 49882 / DSM 28221 / CCUG 30454 / Houston 1) (Rochalimaea henselae).